Here is a 376-residue protein sequence, read N- to C-terminus: Heat-inducible transcription repressor HrcA (376 aa).

This sequence belongs to the HrcA family.

Functionally, negative regulator of class I heat shock genes (grpE-dnaK-dnaJ and groELS operons). Prevents heat-shock induction of these operons. This Nostoc punctiforme (strain ATCC 29133 / PCC 73102) protein is Heat-inducible transcription repressor HrcA.